We begin with the raw amino-acid sequence, 253 residues long: DNA repair protein RecO (253 aa).

Belongs to the RecO family.

Functionally, involved in DNA repair and RecF pathway recombination. The polypeptide is DNA repair protein RecO (Staphylococcus epidermidis (strain ATCC 35984 / DSM 28319 / BCRC 17069 / CCUG 31568 / BM 3577 / RP62A)).